Here is a 211-residue protein sequence, read N- to C-terminus: Uracil phosphoribosyltransferase (211 aa).

5-phospho-alpha-D-ribose 1-diphosphate-binding positions include arginine 81, arginine 106, and 133-141; that span reads DPMLATGNS. Uracil is bound by residues isoleucine 196 and 201-203; that span reads GDA. Residue aspartate 202 participates in 5-phospho-alpha-D-ribose 1-diphosphate binding.

The protein belongs to the UPRTase family. Mg(2+) serves as cofactor.

It carries out the reaction UMP + diphosphate = 5-phospho-alpha-D-ribose 1-diphosphate + uracil. It functions in the pathway pyrimidine metabolism; UMP biosynthesis via salvage pathway; UMP from uracil: step 1/1. Its activity is regulated as follows. Allosterically activated by GTP. Functionally, catalyzes the conversion of uracil and 5-phospho-alpha-D-ribose 1-diphosphate (PRPP) to UMP and diphosphate. This is Uracil phosphoribosyltransferase from Paracoccus denitrificans (strain Pd 1222).